A 347-amino-acid polypeptide reads, in one-letter code: S-adenosylmethionine decarboxylase proenzyme (347 aa).

Active-site residues include Glu10 and Glu13. Residue Ser66 is the Schiff-base intermediate with substrate; via pyruvic acid of the active site. Ser66 is subject to Pyruvic acid (Ser); by autocatalysis. Cys80 serves as the catalytic Proton donor; for catalytic activity. Residues Ser237 and His251 each act as proton acceptor; for processing activity in the active site.

The protein belongs to the eukaryotic AdoMetDC family. Pyruvate is required as a cofactor. Is synthesized initially as an inactive proenzyme. Formation of the active enzyme involves a self-maturation process in which the active site pyruvoyl group is generated from an internal serine residue via an autocatalytic post-translational modification. Two non-identical subunits are generated from the proenzyme in this reaction, and the pyruvate is formed at the N-terminus of the alpha chain, which is derived from the carboxyl end of the proenzyme. The post-translation cleavage follows an unusual pathway, termed non-hydrolytic serinolysis, in which the side chain hydroxyl group of the serine supplies its oxygen atom to form the C-terminus of the beta chain, while the remainder of the serine residue undergoes an oxidative deamination to produce ammonia and the pyruvoyl group blocking the N-terminus of the alpha chain.

The catalysed reaction is S-adenosyl-L-methionine + H(+) = S-adenosyl 3-(methylsulfanyl)propylamine + CO2. It participates in amine and polyamine biosynthesis; S-adenosylmethioninamine biosynthesis; S-adenosylmethioninamine from S-adenosyl-L-methionine: step 1/1. The polypeptide is S-adenosylmethionine decarboxylase proenzyme (SamDC) (Drosophila melanogaster (Fruit fly)).